The chain runs to 119 residues: Small ribosomal subunit protein bS16 (119 aa).

It belongs to the bacterial ribosomal protein bS16 family.

This is Small ribosomal subunit protein bS16 from Chlamydia caviae (strain ATCC VR-813 / DSM 19441 / 03DC25 / GPIC) (Chlamydophila caviae).